Consider the following 372-residue polypeptide: 4-hydroxy-3-methylbut-2-en-1-yl diphosphate synthase (flavodoxin) (372 aa).

Residues cysteine 270, cysteine 273, cysteine 305, and glutamate 312 each coordinate [4Fe-4S] cluster.

Belongs to the IspG family. It depends on [4Fe-4S] cluster as a cofactor.

The catalysed reaction is (2E)-4-hydroxy-3-methylbut-2-enyl diphosphate + oxidized [flavodoxin] + H2O + 2 H(+) = 2-C-methyl-D-erythritol 2,4-cyclic diphosphate + reduced [flavodoxin]. It functions in the pathway isoprenoid biosynthesis; isopentenyl diphosphate biosynthesis via DXP pathway; isopentenyl diphosphate from 1-deoxy-D-xylulose 5-phosphate: step 5/6. Functionally, converts 2C-methyl-D-erythritol 2,4-cyclodiphosphate (ME-2,4cPP) into 1-hydroxy-2-methyl-2-(E)-butenyl 4-diphosphate. The sequence is that of 4-hydroxy-3-methylbut-2-en-1-yl diphosphate synthase (flavodoxin) from Idiomarina loihiensis (strain ATCC BAA-735 / DSM 15497 / L2-TR).